The following is a 164-amino-acid chain: MSNFAGDETAPFFGFLGAAAALVFSCMGAAYGTAKSGVGVASMGVMRPELVMKSIVPVVMAGVLGIYGLIIAVIISTGINPKTKSYYLFDGYAHLSSGLACGLAGLSAGMAIGIVGDAGVRANAQQPKLFVGMILILIFAEALALYGLIVGIILSSRAGQSRAE.

Residues 1 to 9 (MSNFAGDET) are Lumenal-facing. A helical membrane pass occupies residues 10-32 (APFFGFLGAAAALVFSCMGAAYG). At 33 to 54 (TAKSGVGVASMGVMRPELVMKS) the chain is on the cytoplasmic side. Residues 55–75 (IVPVVMAGVLGIYGLIIAVII) form a helical membrane-spanning segment. Over 76–94 (STGINPKTKSYYLFDGYAH) the chain is Lumenal. A helical membrane pass occupies residues 95-116 (LSSGLACGLAGLSAGMAIGIVG). Residues 117–128 (DAGVRANAQQPK) are Cytoplasmic-facing. A helical transmembrane segment spans residues 129–154 (LFVGMILILIFAEALALYGLIVGIIL). Over 155 to 164 (SSRAGQSRAE) the chain is Lumenal.

This sequence belongs to the V-ATPase proteolipid subunit family. As to quaternary structure, V-ATPase is a heteromultimeric enzyme composed of a peripheral catalytic V1 complex (main components: subunits A, B, C, D, E, and F) attached to an integral membrane V0 proton pore complex (main component: the proteolipid protein; which is present as a hexamer that forms the proton-conducting pore).

The protein localises to the vacuole membrane. Its function is as follows. Proton-conducting pore forming subunit of the membrane integral V0 complex of vacuolar ATPase. V-ATPase is responsible for acidifying a variety of intracellular compartments in eukaryotic cells. The sequence is that of V-type proton ATPase 16 kDa proteolipid subunit from Solanum lycopersicum (Tomato).